The following is a 383-amino-acid chain: TnpB-like protein ORF383B (383 aa).

Zn(2+) contacts are provided by cysteine 328, cysteine 331, cysteine 345, and cysteine 348.

It in the N-terminal section; belongs to the transposase 2 family. In the C-terminal section; belongs to the transposase 35 family.

The chain is TnpB-like protein ORF383B from Acidianus convivator (ATV).